The primary structure comprises 198 residues: Probable GTP-binding protein EngB (198 aa).

In terms of domain architecture, EngB-type G spans 22-195 (NRNEVAFVGR…IDKLFLEFAT (174 aa)). GTP is bound by residues 30-37 (GRSNVGKS), 57-61 (GKTRL), 75-78 (DLPG), 142-145 (TKSD), and 174-176 (YSS). Residues serine 37 and threonine 59 each contribute to the Mg(2+) site.

Belongs to the TRAFAC class TrmE-Era-EngA-EngB-Septin-like GTPase superfamily. EngB GTPase family. The cofactor is Mg(2+).

Functionally, necessary for normal cell division and for the maintenance of normal septation. The chain is Probable GTP-binding protein EngB from Clostridium botulinum (strain Alaska E43 / Type E3).